The primary structure comprises 261 residues: 5'-nucleotidase SurE (261 aa).

A divalent metal cation is bound by residues aspartate 8, aspartate 9, serine 40, and asparagine 94.

Belongs to the SurE nucleotidase family. A divalent metal cation is required as a cofactor.

Its subcellular location is the cytoplasm. It catalyses the reaction a ribonucleoside 5'-phosphate + H2O = a ribonucleoside + phosphate. In terms of biological role, nucleotidase that shows phosphatase activity on nucleoside 5'-monophosphates. The sequence is that of 5'-nucleotidase SurE from Anaplasma marginale (strain Florida).